Here is a 100-residue protein sequence, read N- to C-terminus: Small ribosomal subunit protein uS14c (100 aa).

The protein belongs to the universal ribosomal protein uS14 family. In terms of assembly, part of the 30S ribosomal subunit.

It localises to the plastid. The protein resides in the chloroplast. Functionally, binds 16S rRNA, required for the assembly of 30S particles. The polypeptide is Small ribosomal subunit protein uS14c (Cyanidium caldarium (Red alga)).